Reading from the N-terminus, the 267-residue chain is Cilia- and flagella-associated protein 300 (267 aa).

Belongs to the CFAP300 family. In terms of assembly, interacts with DNAAF2.

Its subcellular location is the cytoplasm. The protein localises to the cytoskeleton. The protein resides in the cilium axoneme. In terms of biological role, cilium- and flagellum-specific protein that plays a role in axonemal structure organization and motility. May play a role in outer and inner dynein arm assembly. In Bos taurus (Bovine), this protein is Cilia- and flagella-associated protein 300.